Here is a 126-residue protein sequence, read N- to C-terminus: Fluoride-specific ion channel FluC (126 aa).

A run of 4 helical transmembrane segments spans residues 6-26 (FVAVGVGAAAGAWLRWGFSVL), 36-56 (YGTLAANLLGGYLIGLAVGFF), 69-89 (LAITGFLGGLTTFSTFSSEVV), and 99-119 (WAAMHLLLHLGGSLLLTALGL). Residues G76 and T79 each contribute to the Na(+) site.

Belongs to the fluoride channel Fluc/FEX (TC 1.A.43) family.

Its subcellular location is the cell inner membrane. The enzyme catalyses fluoride(in) = fluoride(out). With respect to regulation, na(+) is not transported, but it plays an essential structural role and its presence is essential for fluoride channel function. Its function is as follows. Fluoride-specific ion channel. Important for reducing fluoride concentration in the cell, thus reducing its toxicity. The chain is Fluoride-specific ion channel FluC from Cupriavidus taiwanensis (strain DSM 17343 / BCRC 17206 / CCUG 44338 / CIP 107171 / LMG 19424 / R1) (Ralstonia taiwanensis (strain LMG 19424)).